Consider the following 118-residue polypeptide: Large ribosomal subunit protein uL18 (118 aa).

This sequence belongs to the universal ribosomal protein uL18 family. In terms of assembly, part of the 50S ribosomal subunit; part of the 5S rRNA/L5/L18/L25 subcomplex. Contacts the 5S and 23S rRNAs.

Functionally, this is one of the proteins that bind and probably mediate the attachment of the 5S RNA into the large ribosomal subunit, where it forms part of the central protuberance. The protein is Large ribosomal subunit protein uL18 of Dichelobacter nodosus (strain VCS1703A).